The following is a 377-amino-acid chain: Queuine tRNA-ribosyltransferase (377 aa).

Asp-93 serves as the catalytic Proton acceptor. Substrate contacts are provided by residues 93–97, Asp-147, Gln-191, and Gly-218; that span reads DSGGF. Residues 249–255 form an RNA binding region; sequence GVGTPLD. The active-site Nucleophile is Asp-268. The interval 273-277 is RNA binding; important for wobble base 34 recognition; it reads TRNAR. Cys-306, Cys-308, Cys-311, and His-337 together coordinate Zn(2+).

Belongs to the queuine tRNA-ribosyltransferase family. As to quaternary structure, homodimer. Within each dimer, one monomer is responsible for RNA recognition and catalysis, while the other monomer binds to the replacement base PreQ1. Zn(2+) is required as a cofactor.

It catalyses the reaction 7-aminomethyl-7-carbaguanine + guanosine(34) in tRNA = 7-aminomethyl-7-carbaguanosine(34) in tRNA + guanine. The protein operates within tRNA modification; tRNA-queuosine biosynthesis. In terms of biological role, catalyzes the base-exchange of a guanine (G) residue with the queuine precursor 7-aminomethyl-7-deazaguanine (PreQ1) at position 34 (anticodon wobble position) in tRNAs with GU(N) anticodons (tRNA-Asp, -Asn, -His and -Tyr). Catalysis occurs through a double-displacement mechanism. The nucleophile active site attacks the C1' of nucleotide 34 to detach the guanine base from the RNA, forming a covalent enzyme-RNA intermediate. The proton acceptor active site deprotonates the incoming PreQ1, allowing a nucleophilic attack on the C1' of the ribose to form the product. After dissociation, two additional enzymatic reactions on the tRNA convert PreQ1 to queuine (Q), resulting in the hypermodified nucleoside queuosine (7-(((4,5-cis-dihydroxy-2-cyclopenten-1-yl)amino)methyl)-7-deazaguanosine). The polypeptide is Queuine tRNA-ribosyltransferase (Oleidesulfovibrio alaskensis (strain ATCC BAA-1058 / DSM 17464 / G20) (Desulfovibrio alaskensis)).